Reading from the N-terminus, the 75-residue chain is Protein RALF-like 9 (75 aa).

The signal sequence occupies residues 1-28; it reads MGMSKSIKVILSLALVVFLALAATKVEA. Intrachain disulfides connect C46-C54 and C66-C72.

This sequence belongs to the plant rapid alkalinization factor (RALF) family.

It localises to the secreted. Its function is as follows. Cell signaling peptide that may regulate plant stress, growth, and development. Mediates a rapid alkalinization of extracellular space by mediating a transient increase in the cytoplasmic Ca(2+) concentration leading to a calcium-dependent signaling events through a cell surface receptor and a concomitant activation of some intracellular mitogen-activated protein kinases. The protein is Protein RALF-like 9 (RALFL9) of Arabidopsis thaliana (Mouse-ear cress).